The primary structure comprises 154 residues: 6,7-dimethyl-8-ribityllumazine synthase (154 aa).

5-amino-6-(D-ribitylamino)uracil-binding positions include phenylalanine 23, 57–59 (AFE), and 81–83 (AVI). Residue 86–87 (AT) coordinates (2S)-2-hydroxy-3-oxobutyl phosphate. Histidine 89 (proton donor) is an active-site residue. A 5-amino-6-(D-ribitylamino)uracil-binding site is contributed by phenylalanine 114. Residue arginine 128 coordinates (2S)-2-hydroxy-3-oxobutyl phosphate.

The protein belongs to the DMRL synthase family.

It catalyses the reaction (2S)-2-hydroxy-3-oxobutyl phosphate + 5-amino-6-(D-ribitylamino)uracil = 6,7-dimethyl-8-(1-D-ribityl)lumazine + phosphate + 2 H2O + H(+). The protein operates within cofactor biosynthesis; riboflavin biosynthesis; riboflavin from 2-hydroxy-3-oxobutyl phosphate and 5-amino-6-(D-ribitylamino)uracil: step 1/2. Its function is as follows. Catalyzes the formation of 6,7-dimethyl-8-ribityllumazine by condensation of 5-amino-6-(D-ribitylamino)uracil with 3,4-dihydroxy-2-butanone 4-phosphate. This is the penultimate step in the biosynthesis of riboflavin. The protein is 6,7-dimethyl-8-ribityllumazine synthase of Syntrophus aciditrophicus (strain SB).